A 645-amino-acid chain; its full sequence is Sodium/potassium/calcium exchanger 3 (645 aa).

The signal sequence occupies residues 1 to 43 (MPPPGDQDCARRRSRRRRRDLLLSQLCFLASVALLLWSLSSLR). Residues 44–106 (EQKELDLMDL…DIFSNEDRRQ (63 aa)) lie on the Extracellular side of the membrane. Residues asparagine 70 and asparagine 85 are each glycosylated (N-linked (GlcNAc...) asparagine). Residues 107–127 (GAVVLHVLCAMYMFYALAIVC) form a helical membrane-spanning segment. Over 128–151 (DDFFVPSLEKICERLHLSEDVAGA) the chain is Cytoplasmic. One copy of the Alpha-1 repeat lies at 148-188 (VAGATFMAAGSSAPELFTSVIGVFITKGDVGVGTIVGSAVF). A helical transmembrane segment spans residues 152–172 (TFMAAGSSAPELFTSVIGVFI). Topologically, residues 173–181 (TKGDVGVGT) are extracellular. The helical transmembrane segment at 182–202 (IVGSAVFNILCIIGVCGLFAG) threads the bilayer. The Cytoplasmic segment spans residues 203–209 (QVVALSS). Residues 210–230 (WCLLRDSIYYTLSVVALIVFI) form a helical membrane-spanning segment. The Extracellular portion of the chain corresponds to 231–234 (YDEK). Residues 235-255 (VSWWESLVLVLMYLIYIVIMK) form a helical membrane-spanning segment. The Cytoplasmic portion of the chain corresponds to 256-486 (YNACIHQCFE…WFMVTFASST (231 aa)). Serine 307 carries the phosphoserine modification. Disordered stretches follow at residues 379 to 398 (TVENGTGPSSAPDRGVNGTR) and 404 to 442 (AETDNETENENEDNENNENDEEEEEDEDDDEGPYTPFDP). The span at 404–435 (AETDNETENENEDNENNENDEEEEEDEDDDEG) shows a compositional bias: acidic residues. Residues 487 to 507 (LWIAAFSYMMVWMVTIIGYTL) traverse the membrane as a helical segment. Topologically, residues 508-512 (GIPDV) are extracellular. Residues 513 to 533 (IMGITFLAAGTSVPDCMASLI) traverse the membrane as a helical segment. An Alpha-2 repeat occupies 520 to 551 (AAGTSVPDCMASLIVARQGMGDMAVSNSIGSN). Residues 534–551 (VARQGMGDMAVSNSIGSN) lie on the Cytoplasmic side of the membrane. The chain crosses the membrane as a helical span at residues 552 to 572 (VFDILIGLGLPWALQTLAVDY). Residues 573–582 (GSYIRLNSRG) are Extracellular-facing. The helical transmembrane segment at 583-603 (LIYSVGLLLASVFVTVFGVHL) threads the bilayer. Topologically, residues 604-617 (NKWQLDKKLGCGCL) are cytoplasmic. The chain crosses the membrane as a helical span at residues 618–638 (FLYGVFLCFSIMTEFNVFTFV). Over 639–645 (NLPMCGD) the chain is Extracellular.

Belongs to the Ca(2+):cation antiporter (CaCA) (TC 2.A.19) family. SLC24A subfamily. As to expression, abundant in the brain. Highest levels found in selected thalamic nuclei, hippocampal CA1 neurons and in layer IV of the cerebral cortex. Expressed in dental tissues.

It is found in the cell membrane. It catalyses the reaction Ca(2+)(out) + K(+)(out) + 4 Na(+)(in) = Ca(2+)(in) + K(+)(in) + 4 Na(+)(out). Calcium, potassium:sodium antiporter that transports 1 Ca(2+) and 1 K(+) in exchange for 4 Na(+). This is Sodium/potassium/calcium exchanger 3 (Slc24a3) from Mus musculus (Mouse).